A 356-amino-acid chain; its full sequence is tRNA N6-adenosine threonylcarbamoyltransferase (356 aa).

Residues His115 and His119 each contribute to the Fe cation site. Residues 138-142, Asp171, Gly184, and Asn283 each bind substrate; that span reads LVSGG. Asp311 serves as a coordination point for Fe cation.

It belongs to the KAE1 / TsaD family. Fe(2+) is required as a cofactor.

The protein localises to the cytoplasm. It catalyses the reaction L-threonylcarbamoyladenylate + adenosine(37) in tRNA = N(6)-L-threonylcarbamoyladenosine(37) in tRNA + AMP + H(+). Its function is as follows. Required for the formation of a threonylcarbamoyl group on adenosine at position 37 (t(6)A37) in tRNAs that read codons beginning with adenine. Is involved in the transfer of the threonylcarbamoyl moiety of threonylcarbamoyl-AMP (TC-AMP) to the N6 group of A37, together with TsaE and TsaB. TsaD likely plays a direct catalytic role in this reaction. This chain is tRNA N6-adenosine threonylcarbamoyltransferase, found in Synechococcus sp. (strain WH7803).